We begin with the raw amino-acid sequence, 220 residues long: N-(5'-phosphoribosyl)anthranilate isomerase (220 aa).

Belongs to the TrpF family.

The enzyme catalyses N-(5-phospho-beta-D-ribosyl)anthranilate = 1-(2-carboxyphenylamino)-1-deoxy-D-ribulose 5-phosphate. It participates in amino-acid biosynthesis; L-tryptophan biosynthesis; L-tryptophan from chorismate: step 3/5. The chain is N-(5'-phosphoribosyl)anthranilate isomerase from Leptothrix cholodnii (strain ATCC 51168 / LMG 8142 / SP-6) (Leptothrix discophora (strain SP-6)).